Reading from the N-terminus, the 509-residue chain is Activin receptor type-1 (509 aa).

Positions 1 to 20 (MVDGVMILPVLMMMAFPSPS) are cleaved as a signal peptide. Topologically, residues 21–123 (VEDEKPKVNQ…FPGTQNFHLE (103 aa)) are extracellular. A glycan (N-linked (GlcNAc...) asparagine) is linked at asparagine 102. The helical transmembrane segment at 124–146 (VGLIILSVVFAVCLLACILGVAL) threads the bilayer. The Cytoplasmic portion of the chain corresponds to 147–509 (RKFKRRNQER…NSLDKLKTDC (363 aa)). Residues 178–207 (STLAELLDHSCTSGSGSGLPFLVQRTVARQ) form the GS domain. One can recognise a Protein kinase domain in the interval 208–502 (ITLLECVGKG…KTLTKIDNSL (295 aa)). Residues 214-222 (VGKGRYGEV) and lysine 235 contribute to the ATP site. The Proton acceptor role is filled by aspartate 336. Serine 501 bears the Phosphoserine mark.

Belongs to the protein kinase superfamily. TKL Ser/Thr protein kinase family. TGFB receptor subfamily. As to quaternary structure, interacts with FKBP1A. Interacts with FCHO1. Interacts with CLU. Interacts with type II receptors AMHR2 and ACVR2A. Interacts with BMP7. Interacts with BMP9. Interacts with BMP6 (when glycosylated); the interaction may induce HAMP expression. Interacts with TSC22D1/TSC-22. Requires Mg(2+) as cofactor. Mn(2+) serves as cofactor. As to expression, highly expressed in bone during developmental stages. Expressed in normal parenchymal cells, endothelial cells, fibroblasts and tumor-derived epithelial cells.

The protein localises to the membrane. It carries out the reaction L-threonyl-[receptor-protein] + ATP = O-phospho-L-threonyl-[receptor-protein] + ADP + H(+). It catalyses the reaction L-seryl-[receptor-protein] + ATP = O-phospho-L-seryl-[receptor-protein] + ADP + H(+). Functionally, bone morphogenetic protein (BMP) type I receptor that is involved in a wide variety of biological processes, including bone, heart, cartilage, nervous, and reproductive system development and regulation. As a type I receptor, forms heterotetrameric receptor complexes with the type II receptors AMHR2, ACVR2A ors ACVR2B. Upon binding of ligands such as BMP7 or BMP9 to the heteromeric complexes, type II receptors transphosphorylate ACVR1 intracellular domain. In turn, ACVR1 kinase domain is activated and subsequently phosphorylates SMAD1/5/8 proteins that transduce the signal. In addition to its role in mediating BMP pathway-specific signaling, suppresses TGFbeta/activin pathway signaling by interfering with the binding of activin to its type II receptor. Besides canonical SMAD signaling, can activate non-canonical pathways such as p38 mitogen-activated protein kinases/MAPKs. May promote the expression of HAMP, potentially via its interaction with BMP6. The polypeptide is Activin receptor type-1 (Acvr1) (Mus musculus (Mouse)).